Reading from the N-terminus, the 140-residue chain is Gonadotropin subunit beta-2 (140 aa).

A signal peptide spans 1–24 (MSVYPECTWLLFVCLCHLLVSAGG). 6 disulfide bridges follow: Cys30/Cys78, Cys44/Cys93, Cys47/Cys131, Cys55/Cys109, Cys59/Cys111, and Cys114/Cys121. The N-linked (GlcNAc...) asparagine glycan is linked to Asn34.

The protein belongs to the glycoprotein hormones subunit beta family. As to quaternary structure, heterodimer of an alpha and a beta chain.

Its subcellular location is the secreted. In terms of biological role, involved in gametogenesis and steroidogenesis. The protein is Gonadotropin subunit beta-2 (cgbb) of Anguilla anguilla (European freshwater eel).